A 485-amino-acid polypeptide reads, in one-letter code: Aspartyl/glutamyl-tRNA(Asn/Gln) amidotransferase subunit B (485 aa).

This sequence belongs to the GatB/GatE family. GatB subfamily. As to quaternary structure, heterotrimer of A, B and C subunits.

The enzyme catalyses L-glutamyl-tRNA(Gln) + L-glutamine + ATP + H2O = L-glutaminyl-tRNA(Gln) + L-glutamate + ADP + phosphate + H(+). The catalysed reaction is L-aspartyl-tRNA(Asn) + L-glutamine + ATP + H2O = L-asparaginyl-tRNA(Asn) + L-glutamate + ADP + phosphate + 2 H(+). Allows the formation of correctly charged Asn-tRNA(Asn) or Gln-tRNA(Gln) through the transamidation of misacylated Asp-tRNA(Asn) or Glu-tRNA(Gln) in organisms which lack either or both of asparaginyl-tRNA or glutaminyl-tRNA synthetases. The reaction takes place in the presence of glutamine and ATP through an activated phospho-Asp-tRNA(Asn) or phospho-Glu-tRNA(Gln). The polypeptide is Aspartyl/glutamyl-tRNA(Asn/Gln) amidotransferase subunit B (Anaplasma marginale (strain Florida)).